The chain runs to 256 residues: Imidazole glycerol phosphate synthase subunit HisF (256 aa).

Catalysis depends on residues Asp11 and Asp130.

This sequence belongs to the HisA/HisF family. As to quaternary structure, heterodimer of HisH and HisF.

The protein localises to the cytoplasm. The enzyme catalyses 5-[(5-phospho-1-deoxy-D-ribulos-1-ylimino)methylamino]-1-(5-phospho-beta-D-ribosyl)imidazole-4-carboxamide + L-glutamine = D-erythro-1-(imidazol-4-yl)glycerol 3-phosphate + 5-amino-1-(5-phospho-beta-D-ribosyl)imidazole-4-carboxamide + L-glutamate + H(+). It functions in the pathway amino-acid biosynthesis; L-histidine biosynthesis; L-histidine from 5-phospho-alpha-D-ribose 1-diphosphate: step 5/9. IGPS catalyzes the conversion of PRFAR and glutamine to IGP, AICAR and glutamate. The HisF subunit catalyzes the cyclization activity that produces IGP and AICAR from PRFAR using the ammonia provided by the HisH subunit. The chain is Imidazole glycerol phosphate synthase subunit HisF from Prochlorococcus marinus (strain NATL2A).